The primary structure comprises 172 residues: NAD(P)H-quinone oxidoreductase subunit I, chloroplastic (172 aa).

4Fe-4S ferredoxin-type domains lie at 55–84 and 95–124; these read GRIH…VDWK and LNYS…MTEE. [4Fe-4S] cluster is bound by residues Cys64, Cys67, Cys70, Cys74, Cys104, Cys107, Cys110, and Cys114.

Belongs to the complex I 23 kDa subunit family. NDH is composed of at least 16 different subunits, 5 of which are encoded in the nucleus. [4Fe-4S] cluster is required as a cofactor.

It localises to the plastid. The protein resides in the chloroplast thylakoid membrane. The enzyme catalyses a plastoquinone + NADH + (n+1) H(+)(in) = a plastoquinol + NAD(+) + n H(+)(out). It carries out the reaction a plastoquinone + NADPH + (n+1) H(+)(in) = a plastoquinol + NADP(+) + n H(+)(out). Its function is as follows. NDH shuttles electrons from NAD(P)H:plastoquinone, via FMN and iron-sulfur (Fe-S) centers, to quinones in the photosynthetic chain and possibly in a chloroplast respiratory chain. The immediate electron acceptor for the enzyme in this species is believed to be plastoquinone. Couples the redox reaction to proton translocation, and thus conserves the redox energy in a proton gradient. This is NAD(P)H-quinone oxidoreductase subunit I, chloroplastic from Olimarabidopsis pumila (Dwarf rocket).